A 144-amino-acid polypeptide reads, in one-letter code: Large ribosomal subunit protein uL15 (144 aa).

The interval 1–58 (MRLNTLAPAAGSKHAPKRVGRGIGSGLGKTGGRGHKGQKSRSGGKVRPGFEGGQMPLK) is disordered. A compositionally biased stretch (gly residues) spans 21–31 (RGIGSGLGKTG). A compositionally biased stretch (basic residues) spans 32–44 (GRGHKGQKSRSGG).

This sequence belongs to the universal ribosomal protein uL15 family. Part of the 50S ribosomal subunit.

Its function is as follows. Binds to the 23S rRNA. The sequence is that of Large ribosomal subunit protein uL15 from Vibrio parahaemolyticus serotype O3:K6 (strain RIMD 2210633).